A 330-amino-acid polypeptide reads, in one-letter code: Virulence plasmid integrase pGP8-D (330 aa).

One can recognise a Core-binding (CB) domain in the interval 39 to 124; sequence FSLFEVIMHW…SYISLTRFLN (86 aa). The 176-residue stretch at 152–327 folds into the Tyr recombinase domain; it reads VKTDAMNSLQ…SREDNASKKM (176 aa). Residues Arg-189, Lys-214, His-279, Arg-282, and His-305 contribute to the active site. Tyr-314 functions as the O-(3'-phospho-DNA)-tyrosine intermediate in the catalytic mechanism.

This sequence belongs to the 'phage' integrase family.

The chain is Virulence plasmid integrase pGP8-D from Chlamydia trachomatis serovar L2 (strain ATCC VR-902B / DSM 19102 / 434/Bu).